The following is a 1331-amino-acid chain: NPC1-like intracellular cholesterol transporter 1 (1331 aa).

The N-terminal stretch at 1–20 (MAAAWLGWLLWALLLSAAQG) is a signal peptide. The Extracellular segment spans residues 21–282 (ELYTPKHEAG…RPSFYMGRMP (262 aa)). Disulfide bonds link cysteine 32-cysteine 90, cysteine 38-cysteine 56, cysteine 77-cysteine 125, cysteine 91-cysteine 129, cysteine 113-cysteine 254, cysteine 116-cysteine 172, cysteine 189-cysteine 197, cysteine 243-cysteine 259, and cysteine 256-cysteine 263. 2 N-linked (GlcNAc...) asparagine glycosylation sites follow: asparagine 53 and asparagine 85. Asparagine 138 carries N-linked (GlcNAc...) asparagine glycosylation. Asparagine 244 is a glycosylation site (N-linked (GlcNAc...) asparagine). Residues 283 to 303 (GWLALIIIFTAVFVLLSAVLV) traverse the membrane as a helical segment. Topologically, residues 304–352 (RLRVVSNRNKNKAEGPQEAPKLPHKHKLSPHTILGRFFQNWGTRVASWP) are cytoplasmic. Residues 353–373 (LTVLALSFIVVIALAAGLTFI) traverse the membrane as a helical segment. Over 374–632 (ELTTDPVELW…DEINRTTIQD (259 aa)) the chain is Extracellular. 6 N-linked (GlcNAc...) asparagine glycosylation sites follow: asparagine 416, asparagine 431, asparagine 464, asparagine 479, asparagine 497, and asparagine 506. Cysteine 471 and cysteine 485 are oxidised to a cystine. Cysteine 525 and cysteine 542 form a disulfide bridge. Asparagine 606 and asparagine 626 each carry an N-linked (GlcNAc...) asparagine glycan. One can recognise an SSD domain in the interval 632 to 797 (DLPVFAVSYI…MTAFVALLSL (166 aa)). Residues 633–653 (LPVFAVSYIIVFLYISLALGS) form a helical membrane-spanning segment. Residues 654–665 (YSRCSRVAVESK) lie on the Cytoplasmic side of the membrane. The helical transmembrane segment at 666–686 (ATLGLGGVIVVLGAVLAAMGF) threads the bilayer. Residues 687 to 696 (YSYLGVPSSL) lie on the Extracellular side of the membrane. A helical transmembrane segment spans residues 697-717 (VIIQVVPFLVLAVGADNIFIF). At 718-742 (VLEYQRLPRMPGEQREAHIGRTLGS) the chain is on the cytoplasmic side. A helical membrane pass occupies residues 743 to 763 (VAPSMLLCSLSEAICFFLGAL). Topologically, residues 764–776 (TPMPAVRTFALTS) are extracellular. Residues 777-797 (GLAIILDFLLQMTAFVALLSL) traverse the membrane as a helical segment. The Cytoplasmic segment spans residues 798 to 846 (DSKRQEASRPDVLCCFSTRKLPPPKEKEGLLLRFFRKIYAPFLLHRFIR). The chain crosses the membrane as a helical span at residues 847 to 867 (PVVMLLFLTLFGANLYLMCNI). Over 868–1113 (NVGLDQELAL…QQYLTVLPEG (246 aa)) the chain is Extracellular. Asparagine 909 and asparagine 917 each carry an N-linked (GlcNAc...) asparagine glycan. Intrachain disulfides connect cysteine 920/cysteine 925, cysteine 967/cysteine 1025, and cysteine 981/cysteine 990. N-linked (GlcNAc...) asparagine glycosylation is found at asparagine 996, asparagine 1038, and asparagine 1076. A helical membrane pass occupies residues 1114–1134 (IFTLALCFVPTFVVCYLLLGL). Residues 1135-1142 (DMCSGILN) lie on the Cytoplasmic side of the membrane. The chain crosses the membrane as a helical span at residues 1143 to 1163 (LLSIIMILVDTIGLMAVWGIS). Over 1164 to 1165 (YN) the chain is Extracellular. Residues 1166–1186 (AVSLINLVTAVGMSVEFVSHI) form a helical membrane-spanning segment. Over 1187–1206 (TRSFAVSTKPTRLERAKDAT) the chain is Cytoplasmic. A helical membrane pass occupies residues 1207–1227 (VFMGSAVFAGVAMTNFPGILI). Residues 1228–1242 (LGFAQAQLIQIFFFR) are Extracellular-facing. The chain crosses the membrane as a helical span at residues 1243–1263 (LNLLITLLGLLHGLVFLPVVL). Topologically, residues 1264 to 1331 (SYLGPDVNQA…SSLPKSDQKF (68 aa)) are cytoplasmic.

Belongs to the patched family. In terms of assembly, interacts with RAB11A, MYO5B and RAB11FIP2. Interaction with RAB11A, MYO5B and RAB11FIP2 is required for proper transport to the plasma membrane upon cholesterol depletion. Interacts with NPC2. Interacts with LIMA1. Highly glycosylated. Small intestine showed the highest level of expression. Expression in other tissues including gall bladder, liver, testis and stomach is also observed. Along the duodenum-ileum axis, the levels vary in different segments of the intestine with peak expression in the proximal jejunum. Protein expression is confined to the enterocyte. Discrete localization to the epithelial layer bordering the luminal space along the crypt-villus axis. Protein expression in the enterocyte is observed closest to the luminal space. Expression in enterocytes from the proximal (jejunum) but not in the distal (ileum) region.

The protein resides in the apical cell membrane. It is found in the cell membrane. The catalysed reaction is cholesterol(in) = cholesterol(out). It catalyses the reaction sitosterol(out) = sitosterol(in). In terms of biological role, plays a major role in cholesterol homeostasis. Critical for the uptake of cholesterol across the plasma membrane of the intestinal enterocyte. Involved in plant sterol absorption, it transports sitosterol, although at lower rates than cholesterol. Is the direct molecular target of ezetimibe, a drug that inhibits cholesterol absorption and is approved for the treatment of hypercholesterolemia. May have a function in the transport of multiple lipids and their homeostasis, thereby influencing lipid metabolism regulation. May be involved in caveolin trafficking from the plasma membrane. Acts as a negative regulator of NPC2 and down-regulates its expression and secretion by inhibiting its maturation and accelerating its degradation. In Rattus norvegicus (Rat), this protein is NPC1-like intracellular cholesterol transporter 1.